The chain runs to 414 residues: Dihydroorotase (414 aa).

The Zn(2+) site is built by His-56 and His-58. Substrate is bound by residues 58-60 (HFR) and Asn-90. Zn(2+) is bound by residues Lys-138, His-171, His-219, and Asp-280. An N6-carboxylysine modification is found at Lys-138. Asp-280 is a catalytic residue. A substrate-binding site is contributed by His-284.

This sequence belongs to the metallo-dependent hydrolases superfamily. DHOase family. Class I DHOase subfamily. Requires Zn(2+) as cofactor.

The enzyme catalyses (S)-dihydroorotate + H2O = N-carbamoyl-L-aspartate + H(+). Its pathway is pyrimidine metabolism; UMP biosynthesis via de novo pathway; (S)-dihydroorotate from bicarbonate: step 3/3. Its function is as follows. Catalyzes the reversible cyclization of carbamoyl aspartate to dihydroorotate. The chain is Dihydroorotase from Thermoplasma acidophilum (strain ATCC 25905 / DSM 1728 / JCM 9062 / NBRC 15155 / AMRC-C165).